Reading from the N-terminus, the 693-residue chain is Phosphoribosylformylglycinamidine synthase subunit PurL (693 aa).

Histidine 34 is a catalytic residue. Residues tyrosine 37 and lysine 76 each coordinate ATP. A Mg(2+)-binding site is contributed by glutamate 78. Residues 79-82 and arginine 101 each bind substrate; that span reads SHNH. The active-site Proton acceptor is the histidine 80. A Mg(2+)-binding site is contributed by aspartate 102. Glutamine 222 provides a ligand contact to substrate. A Mg(2+)-binding site is contributed by aspartate 248. 292–294 is a substrate binding site; it reads ETQ. The ATP site is built by aspartate 470 and glycine 507. Position 510 (serine 510) interacts with substrate.

This sequence belongs to the FGAMS family. In terms of assembly, monomer. Part of the FGAM synthase complex composed of 1 PurL, 1 PurQ and 2 PurS subunits.

The protein resides in the cytoplasm. The enzyme catalyses N(2)-formyl-N(1)-(5-phospho-beta-D-ribosyl)glycinamide + L-glutamine + ATP + H2O = 2-formamido-N(1)-(5-O-phospho-beta-D-ribosyl)acetamidine + L-glutamate + ADP + phosphate + H(+). It participates in purine metabolism; IMP biosynthesis via de novo pathway; 5-amino-1-(5-phospho-D-ribosyl)imidazole from N(2)-formyl-N(1)-(5-phospho-D-ribosyl)glycinamide: step 1/2. Part of the phosphoribosylformylglycinamidine synthase complex involved in the purines biosynthetic pathway. Catalyzes the ATP-dependent conversion of formylglycinamide ribonucleotide (FGAR) and glutamine to yield formylglycinamidine ribonucleotide (FGAM) and glutamate. The FGAM synthase complex is composed of three subunits. PurQ produces an ammonia molecule by converting glutamine to glutamate. PurL transfers the ammonia molecule to FGAR to form FGAM in an ATP-dependent manner. PurS interacts with PurQ and PurL and is thought to assist in the transfer of the ammonia molecule from PurQ to PurL. The sequence is that of Phosphoribosylformylglycinamidine synthase subunit PurL from Pyrobaculum islandicum (strain DSM 4184 / JCM 9189 / GEO3).